A 436-amino-acid chain; its full sequence is Putative ankyrin repeat protein FPV245 (436 aa).

ANK repeat units lie at residues 1–30 (MSVDWRTEIYSGDISLVEKLIKNKGNCINI), 34–63 (ETTTPLIDAIRTGNAKIVELFIKHGAQVNH), 67–96 (KIPNPLLTAIKIGSHDIVKLLLINGVDTSI), 98–119 (PVPCINKEMIKTILDSGVKVNT), 123–152 (KSKTFLHYAIKNNDLEVIKMLFEYGADVNI), 156–185 (NGCYPIHIATRSNSYEIIKLLLEKGAYANV), 189–218 (YGNSPLHNAAKYGDYACIKLVLDHTNNISN), 222–252 (NGVTPLHNAILYNRSAVELLINNRSINDTDV), 253–283 (DGYTPLHYALQPPCSIDIIDILLYNNADISI), and 287–317 (NGRNPIDTAFKYINRDSVIKELLANAVLINE).

This is Putative ankyrin repeat protein FPV245 from Vertebrata (FPV).